The chain runs to 152 residues: UPF0225 protein YchJ (152 aa).

It belongs to the UPF0225 family.

This is UPF0225 protein YchJ (ychJ) from Salmonella typhimurium (strain LT2 / SGSC1412 / ATCC 700720).